A 328-amino-acid polypeptide reads, in one-letter code: Sulfate adenylyltransferase subunit 2 (328 aa).

2 disordered regions span residues 15 to 34 and 304 to 328; these read AAPD…PSSH and SERE…EGYF.

Belongs to the PAPS reductase family. CysD subfamily. Heterodimer composed of CysD, the smaller subunit, and CysN.

The enzyme catalyses sulfate + ATP + H(+) = adenosine 5'-phosphosulfate + diphosphate. It functions in the pathway sulfur metabolism; hydrogen sulfide biosynthesis; sulfite from sulfate: step 1/3. With CysN forms the ATP sulfurylase (ATPS) that catalyzes the adenylation of sulfate producing adenosine 5'-phosphosulfate (APS) and diphosphate, the first enzymatic step in sulfur assimilation pathway. APS synthesis involves the formation of a high-energy phosphoric-sulfuric acid anhydride bond driven by GTP hydrolysis by CysN coupled to ATP hydrolysis by CysD. The chain is Sulfate adenylyltransferase subunit 2 from Rhodopseudomonas palustris (strain BisA53).